Consider the following 747-residue polypeptide: MNGPPDRVDFKPMGPHHGGSFRPMGFAYDDGFRPMGPNGGVGGEGTRSIVGARYNYPAKYPPSESPDRRRFIGKAMESDYSVRPTTPPVQQPLSGQKRGYPISDHGSFTGTDVSDRSSTVKLFVGSVPRTATEEEIRPYFEQHGNVLEVALIKDKRTGQQQGCCFVKYATSKDADRAIRALHNQITLPGGTGPVQVRYADGERERIGTLEFKLFVGSLNKQATEKEVEEIFLQFGHVEDVYLMRDEYRQSRGCGFVKYSSKETAMAAIDGLNGTYTMRGCNQPLIVRFAEPKRPKPGESREMAPPVGLGSGPRFQASGPRPTSNFGDSSGDVSHTNPWRPATSRNVGPPSNTGIRGAGSDFSPKPGQATLPSNQGGPLGGYGVPPLNPLPVPGVSSSATLQQQNRAAGQHITPLKKPLHSPQGLPLPLRPQTNFPGAQAPLQNPYAYSSQLPTSQLPPQQNISRATAPQTPLNINLRPTTVSSATVQFPPRSQQQPLQKMQHPPSELAQLLSQQTQSLQATFQSSQQAISQLQQQVQSMQQPNQNLPLSQNGRAGKQQWAGSAIPRVASTTGSTPVSYVQTAAPAVSQSVGSVKCTWTEHTSPDGFKYYYNGLTGESKWEKPEEMIVFEREQQKQQQHQEKPTIQQSQTQLQPLQQQPQQVQQQYQGQQLQQPFYSSLYPTPGASHNTQYPSLPVGQNSQFPMSGIGQNAQDYARTHIPVGAASMNDISRTQQSRQSPQELMWKNKA.

Residues 80–101 (YSVRPTTPPVQQPLSGQKRGYP) are disordered. 2 RRM domains span residues 120–201 (VKLF…YADG) and 211–291 (FKLF…FAEP). Basic and acidic residues predominate over residues 291–301 (PKRPKPGESRE). Residues 291 to 503 (PKRPKPGESR…QQPLQKMQHP (213 aa)) are disordered. Polar residues-rich tracts occupy residues 320–353 (RPTS…SNTG) and 395–406 (SSSATLQQQNRA). A compositionally biased stretch (low complexity) spans 448 to 460 (SSQLPTSQLPPQQ). The segment covering 461–498 (NISRATAPQTPLNINLRPTTVSSATVQFPPRSQQQPLQ) has biased composition (polar residues). Residues 591-624 (GSVKCTWTEHTSPDGFKYYYNGLTGESKWEKPEE) enclose the WW domain. Residues 630–641 (REQQKQQQHQEK) show a composition bias toward basic and acidic residues. Disordered regions lie at residues 630 to 707 (REQQ…SGIG) and 722 to 747 (AASM…KNKA). Residues 642–673 (PTIQQSQTQLQPLQQQPQQVQQQYQGQQLQQP) show a composition bias toward low complexity. Polar residues-rich tracts occupy residues 674–707 (FYSS…SGIG) and 726–739 (NDIS…QSPQ).

As to quaternary structure, interacts (via C-terminus) with SWI3B and (via WW domain) with FY (via PPLPP motifs). In terms of tissue distribution, constitutively expressed, but the negative feedback maintains the active isoform a low level throughout much of the plant, except in meristematic cells at a specific time in development.

It localises to the nucleus. In terms of biological role, plays a major role in the promotion of the transition of the vegetative meristem to reproductive development. Plays a role in the regulation of flowering time in the autonomous flowering pathway by decreasing FLOWERING LOCUS C mRNA levels. Required for RNA-mediated chromatin silencing of a range of loci in the genome. Cotranscriptionally recognizes aberrant RNA and marks it for silencing. Controls alternative cleavage and polyadenylation on pre-mRNAs and antisense RNAs. Acts redundantly with FPA to prevent the expression of distally polyadenylated antisense RNAs at the FLC locus. This Arabidopsis thaliana (Mouse-ear cress) protein is Flowering time control protein FCA (FCA).